Reading from the N-terminus, the 543-residue chain is CTP synthase (543 aa).

Residues 1–265 (MTKFIFVTGG…DRLVTDRFRI (265 aa)) form an amidoligase domain region. S13 lines the CTP pocket. S13 contributes to the UTP binding site. Residues 14–19 (SLGKGI) and D71 each bind ATP. Residues D71 and E139 each coordinate Mg(2+). Residues 146 to 148 (DIE), 186 to 191 (KTKPTQ), and K222 contribute to the CTP site. UTP is bound by residues 186–191 (KTKPTQ) and K222. The Glutamine amidotransferase type-1 domain occupies 290-541 (EIAMVGKYVD…VEAASQHKQT (252 aa)). Position 351 (G351) interacts with L-glutamine. C378 serves as the catalytic Nucleophile; for glutamine hydrolysis. Residues 379 to 382 (LGMQ), E402, and R469 contribute to the L-glutamine site. Residues H514 and E516 contribute to the active site.

The protein belongs to the CTP synthase family. In terms of assembly, homotetramer.

It catalyses the reaction UTP + L-glutamine + ATP + H2O = CTP + L-glutamate + ADP + phosphate + 2 H(+). The catalysed reaction is L-glutamine + H2O = L-glutamate + NH4(+). It carries out the reaction UTP + NH4(+) + ATP = CTP + ADP + phosphate + 2 H(+). It participates in pyrimidine metabolism; CTP biosynthesis via de novo pathway; CTP from UDP: step 2/2. With respect to regulation, allosterically activated by GTP, when glutamine is the substrate; GTP has no effect on the reaction when ammonia is the substrate. The allosteric effector GTP functions by stabilizing the protein conformation that binds the tetrahedral intermediate(s) formed during glutamine hydrolysis. Inhibited by the product CTP, via allosteric rather than competitive inhibition. In terms of biological role, catalyzes the ATP-dependent amination of UTP to CTP with either L-glutamine or ammonia as the source of nitrogen. Regulates intracellular CTP levels through interactions with the four ribonucleotide triphosphates. The protein is CTP synthase of Hydrogenovibrio crunogenus (strain DSM 25203 / XCL-2) (Thiomicrospira crunogena).